We begin with the raw amino-acid sequence, 173 residues long: MSSKATLALLIYGIIMHYSVYSSPLGLNYPNLRLENEVYDEDGNSLPALAFDSDQIAIRSPPSVADDLYTLYYPPEKGTERHADGMFNKAYRKALGQLSARKYLHSLMAKRVGGGSTMEDDTEPLSKRHSDGIFTDSYSRYRKQMAVKKYLAAVLGKRYRQRYRNKGRRLGYL.

An N-terminal signal peptide occupies residues 1 to 22 (MSSKATLALLIYGIIMHYSVYS). Residues 23–80 (SPLGLNYPNLRLENEVYDEDGNSLPALAFDSDQIAIRSPPSVADDLYTLYYPPEKGTE) constitute a propeptide that is removed on maturation. At Lys-166 the chain carries Lysine amide. A propeptide spanning residues 170–173 (LGYL) is cleaved from the precursor.

It belongs to the glucagon family.

Its subcellular location is the secreted. Functionally, primary role of GHRH is to release GH from the pituitary. In terms of biological role, PACAP plays pivotal roles as a neurotransmitter and/or a neuromodulator. The protein is Glucagon family neuropeptides of Oncorhynchus nerka (Sockeye salmon).